The primary structure comprises 308 residues: Pantothenate synthetase (308 aa).

Position 39–46 (39–46) interacts with ATP; it reads MGALHDGH. The Proton donor role is filled by His-46. Position 71 (Gln-71) interacts with (R)-pantoate. Gln-71 is a binding site for beta-alanine. Position 157 to 160 (157 to 160) interacts with ATP; sequence GEKD. Residue Gln-163 participates in (R)-pantoate binding. Residues Val-186 and 194-197 contribute to the ATP site; that span reads MSSR. Residues 286–308 form a disordered region; that stretch reads IETPAGTAGPDGDRQYAQSPWRN.

It belongs to the pantothenate synthetase family. Homodimer.

Its subcellular location is the cytoplasm. The catalysed reaction is (R)-pantoate + beta-alanine + ATP = (R)-pantothenate + AMP + diphosphate + H(+). The protein operates within cofactor biosynthesis; (R)-pantothenate biosynthesis; (R)-pantothenate from (R)-pantoate and beta-alanine: step 1/1. In terms of biological role, catalyzes the condensation of pantoate with beta-alanine in an ATP-dependent reaction via a pantoyl-adenylate intermediate. The polypeptide is Pantothenate synthetase (Mycolicibacterium paratuberculosis (strain ATCC BAA-968 / K-10) (Mycobacterium paratuberculosis)).